Reading from the N-terminus, the 281-residue chain is N-methyltransferase tcpN (281 aa).

This sequence belongs to the methyltransferase superfamily. LaeA methyltransferase family.

The protein operates within secondary metabolite biosynthesis. N-methyltransferase; part of the gene cluster that mediates the biosynthesis of an unusual class of epipolythiodioxopiperazines (ETPs) lacking the reactive thiol group important for toxicity. Firstly, L-tyrosine is prenylated by tcpD, before undergoing condensation with L-glycine in a reaction catalyzed by the NRPS tcpP leading to the diketopiperazine (DKP) backbone. Afterwards the alpha-carbon of tyrosine is oxidized by the cytochrome P450 tcpC to form a hydroxyl group. However, in contrast other ETP biosynthesis pathways studied so far, tcpC is not able to bishydroxylate the DKP at both alpha-carbon positions, but hydroxylates the alpha-carbon of the tyrosine part and the nitrogen of the glycine part. The next steps involve an alpha,beta-elimination reaction catalyzed by tcpI, a methylation by the methyltransferase tcpN the action of the four enzyme cascade tcpG/K/J/I. Due to a dysfunctional cytochrome P450 monooxygenase tcpC, the pathway leads to the biosynthesis of probable non-toxic metabolites lacking the reactive thiol group. This is N-methyltransferase tcpN from Claviceps purpurea (strain 20.1) (Ergot fungus).